Consider the following 75-residue polypeptide: MSPKVIAICLVALLLPISISHGGRIGPIEPSKASSKVVERGNYDGRVEGCEEDDCLVERLLVAHLDYIYTQGKHN.

An N-terminal signal peptide occupies residues methionine 1–glycine 22. Positions glycine 23–aspartate 66 are excised as a propeptide. Residues tyrosine 67 and tyrosine 69 each carry the sulfotyrosine modification. Residues glycine 72–asparagine 75 constitute a propeptide that is removed on maturation.

It belongs to the phytosulfokine family. In terms of processing, sulfation is important for activity and for the binding to a putative membrane receptor. Post-translationally, PSK-alpha is produced by endopeptidase digestion. PSK-beta is produced from PSK-alpha by exopeptidase digestion.

The protein localises to the secreted. In terms of biological role, promotes plant cell differentiation, organogenesis and somatic embryogenesis as well as cell proliferation. The sequence is that of Phytosulfokines 3 (PSK3) from Oryza sativa subsp. japonica (Rice).